The primary structure comprises 1226 residues: Methionine synthase (1226 aa).

The Hcy-binding domain occupies 6–326 (RAQIEAQLKQ…EHIRHMAMAV (321 aa)). Zn(2+) contacts are provided by Cys-248, Cys-311, and Cys-312. The Pterin-binding domain occupies 357-618 (FVNVGERTNV…VPEKLREAVE (262 aa)). A B12-binding N-terminal domain is found at 651–745 (SALEWRTWSV…FINASKQVGS (95 aa)). Residues Glu-695, 757–761 (GDVHD), His-760, Ser-805, Thr-809, and Ala-861 contribute to the methylcob(III)alamin site. In terms of domain architecture, B12-binding spans 747 to 882 (NGKILLATVK…SDELRPAFVE (136 aa)). The AdoMet activation domain maps to 898–1226 (KKPRTKPVTL…EKWLGPNING (329 aa)). Residues Asp-948, Arg-1136, and 1191 to 1192 (YF) each bind S-adenosyl-L-methionine.

The protein belongs to the vitamin-B12 dependent methionine synthase family. Methylcob(III)alamin is required as a cofactor. Zn(2+) serves as cofactor.

The enzyme catalyses (6S)-5-methyl-5,6,7,8-tetrahydrofolate + L-homocysteine = (6S)-5,6,7,8-tetrahydrofolate + L-methionine. It participates in amino-acid biosynthesis; L-methionine biosynthesis via de novo pathway; L-methionine from L-homocysteine (MetH route): step 1/1. Catalyzes the transfer of a methyl group from methyl-cobalamin to homocysteine, yielding enzyme-bound cob(I)alamin and methionine. Subsequently, remethylates the cofactor using methyltetrahydrofolate. In Vibrio vulnificus (strain YJ016), this protein is Methionine synthase (metH).